The sequence spans 206 residues: LexA repressor (206 aa).

A DNA-binding region (H-T-H motif) is located at residues 28 to 48; sequence RAEIARRLGFKSANAAEEHLK. Active-site for autocatalytic cleavage activity residues include S123 and K160.

Belongs to the peptidase S24 family. As to quaternary structure, homodimer.

The catalysed reaction is Hydrolysis of Ala-|-Gly bond in repressor LexA.. Functionally, represses a number of genes involved in the response to DNA damage (SOS response), including recA and lexA. In the presence of single-stranded DNA, RecA interacts with LexA causing an autocatalytic cleavage which disrupts the DNA-binding part of LexA, leading to derepression of the SOS regulon and eventually DNA repair. This chain is LexA repressor, found in Shewanella pealeana (strain ATCC 700345 / ANG-SQ1).